The primary structure comprises 209 residues: Na(+)-translocating NADH-quinone reductase subunit D (209 aa).

The next 5 membrane-spanning stretches (helical) occupy residues 42-62, 66-86, 103-123, 131-151, and 178-198; these read LVMTIAVTLVTAFSNFFISLI, IPGSVRIIVQMAIIASLVIVV, VFVGLIITNCIVMGRAEAYAM, FMDGIGNGLGYGVILILVGFL, and NGLFLLAPSAFFIIGLLIWGL.

This sequence belongs to the NqrDE/RnfAE family. In terms of assembly, composed of six subunits; NqrA, NqrB, NqrC, NqrD, NqrE and NqrF.

It is found in the cell inner membrane. It catalyses the reaction a ubiquinone + n Na(+)(in) + NADH + H(+) = a ubiquinol + n Na(+)(out) + NAD(+). Its function is as follows. NQR complex catalyzes the reduction of ubiquinone-1 to ubiquinol by two successive reactions, coupled with the transport of Na(+) ions from the cytoplasm to the periplasm. NqrA to NqrE are probably involved in the second step, the conversion of ubisemiquinone to ubiquinol. In Proteus mirabilis (strain HI4320), this protein is Na(+)-translocating NADH-quinone reductase subunit D.